Here is a 353-residue protein sequence, read N- to C-terminus: Photosystem II protein D1 (353 aa).

An N-acetylthreonine modification is found at Thr2. Position 2 is a phosphothreonine (Thr2). A run of 3 helical transmembrane segments spans residues 29-46 (YIGW…TATS), 118-133 (HFLL…EWEL), and 142-156 (WIAV…AATA). His118 provides a ligand contact to chlorophyll a. Residue Tyr126 participates in pheophytin a binding. Positions 170 and 189 each coordinate [CaMn4O5] cluster. A helical membrane pass occupies residues 197–218 (FHMLGVAGVFGGSLFSAMHGSL). Chlorophyll a is bound at residue His198. A quinone contacts are provided by residues His215 and 264–265 (SF). His215 serves as a coordination point for Fe cation. His272 lines the Fe cation pocket. Residues 274-288 (FLAAWPVVGIWFTAL) form a helical membrane-spanning segment. [CaMn4O5] cluster is bound by residues His332, Glu333, Asp342, and Ala344. Residues 345 to 353 (ALEVPYLNG) constitute a propeptide that is removed on maturation.

It belongs to the reaction center PufL/M/PsbA/D family. In terms of assembly, PSII is composed of 1 copy each of membrane proteins PsbA, PsbB, PsbC, PsbD, PsbE, PsbF, PsbH, PsbI, PsbJ, PsbK, PsbL, PsbM, PsbT, PsbX, PsbY, PsbZ, Psb30/Ycf12, at least 3 peripheral proteins of the oxygen-evolving complex and a large number of cofactors. It forms dimeric complexes. It depends on The D1/D2 heterodimer binds P680, chlorophylls that are the primary electron donor of PSII, and subsequent electron acceptors. It shares a non-heme iron and each subunit binds pheophytin, quinone, additional chlorophylls, carotenoids and lipids. D1 provides most of the ligands for the Mn4-Ca-O5 cluster of the oxygen-evolving complex (OEC). There is also a Cl(-1) ion associated with D1 and D2, which is required for oxygen evolution. The PSII complex binds additional chlorophylls, carotenoids and specific lipids. as a cofactor. Post-translationally, phosphorylated in both bundle sheath and mesophyll cells, phosphorylation increases when cells are grown under high rather than low light regimes (70 vs 900 umol photons/m-2/s). PSII is subject to light-induced damage, in particular to D1. Damaged protein is degraded by Deg1 and FtsH proteases and replaced. In maize mesophyll cells D1 degradation is less extensive in grana (stacked) vs stroma (unstacked) lamellae, in part due to exclusion of FtsH from the grana. D1 degradation is faster in bundle sheath cells. In terms of processing, tyr-161 forms a radical intermediate that is referred to as redox-active TyrZ, YZ or Y-Z. Post-translationally, C-terminally processed by CTPA; processing is essential to allow assembly of the oxygen-evolving complex and thus photosynthetic growth.

The protein resides in the plastid. Its subcellular location is the chloroplast thylakoid membrane. It catalyses the reaction 2 a plastoquinone + 4 hnu + 2 H2O = 2 a plastoquinol + O2. Photosystem II (PSII) is a light-driven water:plastoquinone oxidoreductase that uses light energy to abstract electrons from H(2)O, generating O(2) and a proton gradient subsequently used for ATP formation. It consists of a core antenna complex that captures photons, and an electron transfer chain that converts photonic excitation into a charge separation. The D1/D2 (PsbA/PsbD) reaction center heterodimer binds P680, the primary electron donor of PSII as well as several subsequent electron acceptors. The polypeptide is Photosystem II protein D1 (Zea mays (Maize)).